The following is a 379-amino-acid chain: MAKRDYYEVLGVAKNASDDEIKKAYRKLAMKHHPDRNPGNKDAEGHFKEVKEAYEMLSDSQKRAAYDQYGHAGVDPNMGGAGAQGFGGFADAFGDIFGDIFGQAAGGAARGGGRAGPQVYRGADLRYSMEITLEQAAHGYDTQIRVPSWVSCEICHGSGAKPGTKPETCPTCSGSGSVRMSQGFFSIQQTCPKCHGTGTYIPEPCGHCHGAGKVKETKTLEVKIPAGIDDGMRIRSAGNGEPGINGGPSGDLYVEIHIKQHSVFERDGDDLHCQMPIPFTTAALGGEIEVPTLAGRASFTVPEGTQSGKTFRLRGKGIKGLRSSIAGDLYVHVQVETPVKLTEPQRDLLKQFEKALVEGGSRHSPQSKSWFDRVKSFFD.

Residues 5 to 70 (DYYEVLGVAK…QKRAAYDQYG (66 aa)) form the J domain. The segment at 139–217 (GYDTQIRVPS…CHGAGKVKET (79 aa)) adopts a CR-type zinc-finger fold. Positions 152, 155, 169, 172, 191, 194, 205, and 208 each coordinate Zn(2+). CXXCXGXG motif repeat units lie at residues 152–159 (CEICHGSG), 169–176 (CPTCSGSG), 191–198 (CPKCHGTG), and 205–212 (CGHCHGAG).

The protein belongs to the DnaJ family. In terms of assembly, homodimer. Zn(2+) is required as a cofactor.

The protein resides in the cytoplasm. Its function is as follows. Participates actively in the response to hyperosmotic and heat shock by preventing the aggregation of stress-denatured proteins and by disaggregating proteins, also in an autonomous, DnaK-independent fashion. Unfolded proteins bind initially to DnaJ; upon interaction with the DnaJ-bound protein, DnaK hydrolyzes its bound ATP, resulting in the formation of a stable complex. GrpE releases ADP from DnaK; ATP binding to DnaK triggers the release of the substrate protein, thus completing the reaction cycle. Several rounds of ATP-dependent interactions between DnaJ, DnaK and GrpE are required for fully efficient folding. Also involved, together with DnaK and GrpE, in the DNA replication of plasmids through activation of initiation proteins. The sequence is that of Chaperone protein DnaJ from Paraburkholderia phytofirmans (strain DSM 17436 / LMG 22146 / PsJN) (Burkholderia phytofirmans).